The sequence spans 346 residues: E3 ubiquitin-protein ligase RNF146-A (346 aa).

An RING-type zinc finger spans residues 37–75 (CAICLQTCVHPVSLPCKHVFCYLCVKGASWLGKRCALCR). The 77-residue stretch at 91–167 (PELKAASRGN…EHGRRRKIKR (77 aa)) folds into the WWE domain. Disordered regions lie at residues 195–240 (SSAD…GTSL) and 256–301 (ERSH…ALVA). Positions 202 to 216 (SVPAQSGASVQSSSV) are enriched in low complexity. The span at 281-295 (SIEETESDASSDSED) shows a compositional bias: acidic residues.

Interacts with poly-ADP-ribosylated AXIN1, AXIN2, BLZF1 and CASC3. Post-translationally, ubiquitinated; autoubiquitinated. Autoubiquitination is enhanced upon poly(ADP-ribose)-binding.

It is found in the cytoplasm. Its subcellular location is the cytosol. The catalysed reaction is S-ubiquitinyl-[E2 ubiquitin-conjugating enzyme]-L-cysteine + [acceptor protein]-L-lysine = [E2 ubiquitin-conjugating enzyme]-L-cysteine + N(6)-ubiquitinyl-[acceptor protein]-L-lysine.. It participates in protein modification; protein ubiquitination. Its function is as follows. E3 ubiquitin-protein ligase that specifically binds poly-ADP-ribosylated proteins and mediates their ubiquitination and subsequent degradation. Acts as an activator of the Wnt signaling pathway by mediating the ubiquitination of poly-ADP-ribosylated AXIN1 and AXIN2, 2 key components of the beta-catenin destruction complex. Acts in cooperation with tankyrase proteins (TNKS and TNKS2), which mediate poly-ADP-ribosylation of target proteins AXIN1, AXIN2, BLZF1, CASC3, TNKS and TNKS2. Recognizes and binds tankyrase-dependent poly-ADP-ribosylated proteins via its WWE domain and mediates their ubiquitination. The chain is E3 ubiquitin-protein ligase RNF146-A (RNF146A) from Bos taurus (Bovine).